The sequence spans 579 residues: Fatty-acid amide hydrolase 1 (579 aa).

A helical transmembrane segment spans residues A9–L29. Over R30 to D403 the chain is Cytoplasmic. K142 functions as the Charge relay system in the catalytic mechanism. Residues M191, S217, and I238–S241 contribute to the substrate site. The active-site Charge relay system is S217. The active-site Acyl-ester intermediate is the S241. At S241 the chain carries Phosphoserine. The stretch at L404–L433 is an intramembrane region. The Cytoplasmic segment spans residues S434–S579.

This sequence belongs to the amidase family. Homodimer.

The protein resides in the endoplasmic reticulum membrane. It is found in the golgi apparatus membrane. It carries out the reaction N-(5Z,8Z,11Z,14Z-eicosatetraenoyl)-ethanolamine + H2O = ethanolamine + (5Z,8Z,11Z,14Z)-eicosatetraenoate. The enzyme catalyses (9Z)-octadecenamide + H2O = (9Z)-octadecenoate + NH4(+). It catalyses the reaction 2-(5Z,8Z,11Z,14Z-eicosatetraenoyl)-glycerol + H2O = glycerol + (5Z,8Z,11Z,14Z)-eicosatetraenoate + H(+). The catalysed reaction is 1-O-methyl-(5Z,8Z,11Z,14Z)-eicosatetraenoate + H2O = methanol + (5Z,8Z,11Z,14Z)-eicosatetraenoate + H(+). It carries out the reaction (9Z,12Z,15Z)-octadecatrienamide + H2O = (9Z,12Z,15Z)-octadecatrienoate + NH4(+). The enzyme catalyses (5Z,8Z,11Z,14Z)-eicosatetraenamide + H2O = (5Z,8Z,11Z,14Z)-eicosatetraenoate + NH4(+). It catalyses the reaction (6Z)-octadecenamide + H2O = (6Z)-octadecenoate + NH4(+). The catalysed reaction is (15Z)-tetracosenamide + H2O = (15Z)-tetracosenoate + NH4(+). It carries out the reaction (8Z,11Z,14Z)-eicosatrienamide + H2O = (8Z,11Z,14Z)-eicosatrienoate + NH4(+). The enzyme catalyses (11Z,14Z,17Z)-eicosatrienamide + H2O = (11Z,14Z,17Z)-eicosatrienoate + NH4(+). It catalyses the reaction (11Z,14Z)-eicosadienamide + H2O = (11Z,14Z)-eicosadienoate + NH4(+). The catalysed reaction is (9Z,12Z)-octadecadienamide + H2O = (9Z,12Z)-octadecadienoate + NH4(+). It carries out the reaction tetradecamide + H2O = tetradecanoate + NH4(+). The enzyme catalyses N-(9Z-octadecenoyl) ethanolamine + H2O = ethanolamine + (9Z)-octadecenoate. It catalyses the reaction N-(9Z-octadecenoyl)-taurine + H2O = taurine + (9Z)-octadecenoate. The catalysed reaction is (11Z)-eicosenamide + H2O = (11Z)-eicosenoate + NH4(+). It carries out the reaction N-(9Z-hexadecenoyl) ethanolamine + H2O = (9Z)-hexadecenoate + ethanolamine. The enzyme catalyses N-octadecanoyl ethanolamine + H2O = octadecanoate + ethanolamine. It catalyses the reaction N-docosanoyl-ethanolamine + H2O = docosanoate + ethanolamine. The catalysed reaction is N-tetracosanoyl-taurine + H2O = tetracosanoate + taurine. It carries out the reaction N-(15Z-tetracosenoyl)-ethanolamine + H2O = (15Z)-tetracosenoate + ethanolamine. The enzyme catalyses N-docosanoyl-taurine + H2O = docosanoate + taurine. It catalyses the reaction N-(15Z-tetracosenoyl)-taurine + H2O = (15Z)-tetracosenoate + taurine. The catalysed reaction is N-tricosanoyl-taurine + H2O = tricosanoate + taurine. It carries out the reaction (9Z)-octadecenoate + glycine = N-(9Z-octadecenoyl)glycine + H2O. The enzyme catalyses N-(5Z,8Z,11Z,14Z)-eicosatetraenoyl-glycine + H2O = (5Z,8Z,11Z,14Z)-eicosatetraenoate + glycine. It catalyses the reaction N-(5Z,8Z,11Z,14Z-eicosatetraenoyl)-L-serine + H2O = (5Z,8Z,11Z,14Z)-eicosatetraenoate + L-serine. With respect to regulation, inhibited by trifluoromethyl ketone. In terms of biological role, catalyzes the hydrolysis of endogenous amidated lipids like the sleep-inducing lipid oleamide ((9Z)-octadecenamide), the endocannabinoid anandamide (N-(5Z,8Z,11Z,14Z-eicosatetraenoyl)-ethanolamine), as well as other fatty amides, to their corresponding fatty acids, thereby regulating the signaling functions of these molecules. Also catalyzes the hydrolysis of the endocannabinoid 2-arachidonoylglycerol (2-(5Z,8Z,11Z,14Z-eicosatetraenoyl)-glycerol). FAAH cooperates with PM20D1 in the hydrolysis of amino acid-conjugated fatty acids such as N-fatty acyl glycine and N-fatty acyl-L-serine, thereby acting as a physiological regulator of specific subsets of intracellular, but not of extracellular, N-fatty acyl amino acids. The sequence is that of Fatty-acid amide hydrolase 1 (FAAH) from Sus scrofa (Pig).